The following is a 120-amino-acid chain: uncharacterized protein (120 aa).

This is an uncharacterized protein from Allochromatium vinosum (strain ATCC 17899 / DSM 180 / NBRC 103801 / NCIMB 10441 / D) (Chromatium vinosum).